The chain runs to 229 residues: Flagellar L-ring protein (229 aa).

An N-terminal signal peptide occupies residues 1 to 23 (MNPLTRVALAVAAFAALVLALSA). Cys-24 is lipidated: N-palmitoyl cysteine. A lipid anchor (S-diacylglycerol cysteine) is attached at Cys-24.

Belongs to the FlgH family. As to quaternary structure, the basal body constitutes a major portion of the flagellar organelle and consists of four rings (L,P,S, and M) mounted on a central rod.

It localises to the cell outer membrane. Its subcellular location is the bacterial flagellum basal body. Assembles around the rod to form the L-ring and probably protects the motor/basal body from shearing forces during rotation. This is Flagellar L-ring protein from Anaeromyxobacter dehalogenans (strain 2CP-1 / ATCC BAA-258).